We begin with the raw amino-acid sequence, 503 residues long: Lysine--tRNA ligase (503 aa).

Residues Glu414 and Glu421 each contribute to the Mg(2+) site.

The protein belongs to the class-II aminoacyl-tRNA synthetase family. Homodimer. Mg(2+) is required as a cofactor.

Its subcellular location is the cytoplasm. The catalysed reaction is tRNA(Lys) + L-lysine + ATP = L-lysyl-tRNA(Lys) + AMP + diphosphate. The chain is Lysine--tRNA ligase from Laribacter hongkongensis (strain HLHK9).